A 383-amino-acid chain; its full sequence is Succinyl-diaminopimelate desuccinylase (383 aa).

Residue His79 participates in Zn(2+) binding. The active site involves Asp81. Asp110 contributes to the Zn(2+) binding site. Residue Glu141 is the Proton acceptor of the active site. Zn(2+) contacts are provided by Glu142, Glu170, and His355.

Belongs to the peptidase M20A family. DapE subfamily. Homodimer. It depends on Zn(2+) as a cofactor. The cofactor is Co(2+).

It catalyses the reaction N-succinyl-(2S,6S)-2,6-diaminopimelate + H2O = (2S,6S)-2,6-diaminopimelate + succinate. It functions in the pathway amino-acid biosynthesis; L-lysine biosynthesis via DAP pathway; LL-2,6-diaminopimelate from (S)-tetrahydrodipicolinate (succinylase route): step 3/3. Catalyzes the hydrolysis of N-succinyl-L,L-diaminopimelic acid (SDAP), forming succinate and LL-2,6-diaminopimelate (DAP), an intermediate involved in the bacterial biosynthesis of lysine and meso-diaminopimelic acid, an essential component of bacterial cell walls. This is Succinyl-diaminopimelate desuccinylase from Helicobacter pylori (strain HPAG1).